A 350-amino-acid polypeptide reads, in one-letter code: Biotin synthase (350 aa).

The Radical SAM core domain maps to 38–256; the sequence is NHVQVSTLLS…IAVARIMMPE (219 aa). [4Fe-4S] cluster is bound by residues Cys-53, Cys-57, and Cys-60. [2Fe-2S] cluster is bound by residues Cys-97, Cys-128, Cys-188, and Arg-260.

The protein belongs to the radical SAM superfamily. Biotin synthase family. Homodimer. [4Fe-4S] cluster is required as a cofactor. It depends on [2Fe-2S] cluster as a cofactor.

It carries out the reaction (4R,5S)-dethiobiotin + (sulfur carrier)-SH + 2 reduced [2Fe-2S]-[ferredoxin] + 2 S-adenosyl-L-methionine = (sulfur carrier)-H + biotin + 2 5'-deoxyadenosine + 2 L-methionine + 2 oxidized [2Fe-2S]-[ferredoxin]. The protein operates within cofactor biosynthesis; biotin biosynthesis; biotin from 7,8-diaminononanoate: step 2/2. Catalyzes the conversion of dethiobiotin (DTB) to biotin by the insertion of a sulfur atom into dethiobiotin via a radical-based mechanism. The sequence is that of Biotin synthase from Aliivibrio fischeri (strain MJ11) (Vibrio fischeri).